Here is a 148-residue protein sequence, read N- to C-terminus: Large ribosomal subunit protein bL9 (148 aa).

It belongs to the bacterial ribosomal protein bL9 family.

Functionally, binds to the 23S rRNA. The sequence is that of Large ribosomal subunit protein bL9 from Bacillus cereus (strain G9842).